We begin with the raw amino-acid sequence, 301 residues long: Ribosomal RNA small subunit methyltransferase H (301 aa).

S-adenosyl-L-methionine is bound by residues 25-27 (GGH), D45, F72, D94, and Q101.

It belongs to the methyltransferase superfamily. RsmH family.

The protein resides in the cytoplasm. The catalysed reaction is cytidine(1402) in 16S rRNA + S-adenosyl-L-methionine = N(4)-methylcytidine(1402) in 16S rRNA + S-adenosyl-L-homocysteine + H(+). Functionally, specifically methylates the N4 position of cytidine in position 1402 (C1402) of 16S rRNA. The chain is Ribosomal RNA small subunit methyltransferase H from Methylococcus capsulatus (strain ATCC 33009 / NCIMB 11132 / Bath).